The sequence spans 350 residues: F(420)H(2) dehydrogenase subunit H (350 aa).

8 helical membrane-spanning segments follow: residues 21 to 41 (GTVGLVLVGAIFLGGMAAVWI), 94 to 114 (VFMLTSLFLMLVAIPVGAVFI), 128 to 148 (ISILFIEAVSAINIFGIFMAA), 173 to 193 (PLGIAIVSVAVMTGSLNIIDI), 200 to 220 (FVWNIFLQPIGFVVFFIALMA), 261 to 281 (ILGSFLVALLFLGGWNVPAFV), 288 to 308 (GLIAPTGILLLKTVLVLMTII), and 330 to 350 (LLPLSLLNLAWAVGLGLYLGA).

It belongs to the complex I subunit 1 family. As to quaternary structure, the FPO complex is composed of at least 13 different subunits. FpoA, FpoH, FpoJ, FpoK, FpoL, FpoM and FpoN proteins constitute the membrane sector of the complex.

The protein resides in the cell membrane. It catalyses the reaction methanophenazine + reduced coenzyme F420-(gamma-L-Glu)(n) = dihydromethanophenazine + oxidized coenzyme F420-(gamma-L-Glu)(n) + H(+). In terms of biological role, component of the F(420)H(2) dehydrogenase (FPO complex) which is part of the energy-conserving F(420)H(2):heterodisulfide oxidoreductase system. The membrane-bound electron transfer system of the complex plays an important role in the metabolism of methylotrophic methanogens when the organisms grow on methanol or methylamines. Catalyzes the oxidation of methanophenazine to dihydromethanophenazine. It shuttles electrons from F(420)H(2), via FAD and iron-sulfur (Fe-S) centers, to methanophenazine (an electron carrier in the membrane). It couples the redox reaction to proton translocation (for every two electrons transferred, two hydrogen ions are translocated across the cytoplasmic membrane), and thus conserves the redox energy in a proton gradient. It also catalyzes the oxidation of F(420)H(2) with quinones such as 2,3-dimethyl-1,4-naphthoquinone, 2-methyl-1,4-naphthoquinone and tetramethyl-p-benzoquinone. This is F(420)H(2) dehydrogenase subunit H from Methanosarcina mazei (strain ATCC BAA-159 / DSM 3647 / Goe1 / Go1 / JCM 11833 / OCM 88) (Methanosarcina frisia).